We begin with the raw amino-acid sequence, 134 residues long: D-ribose pyranase (134 aa).

The Proton donor role is filled by His-20. Substrate-binding positions include Asp-28, His-99, and Phe-123–Asn-125.

The protein belongs to the RbsD / FucU family. RbsD subfamily. Homodecamer.

The protein resides in the cytoplasm. The enzyme catalyses beta-D-ribopyranose = beta-D-ribofuranose. It participates in carbohydrate metabolism; D-ribose degradation; D-ribose 5-phosphate from beta-D-ribopyranose: step 1/2. In terms of biological role, catalyzes the interconversion of beta-pyran and beta-furan forms of D-ribose. In Staphylococcus epidermidis (strain ATCC 12228 / FDA PCI 1200), this protein is D-ribose pyranase.